A 509-amino-acid chain; its full sequence is NADH dehydrogenase (509 aa).

The interval 1–183 (MVLDANIKAQ…YLNGESFGSG (183 aa)) is membrane-binding. The segment at 184–509 (RMTLEEILAK…LGAFDYLIRN (326 aa)) is catalytic. An FAD-binding site is contributed by 210–241 (DVLVVGGGPAGASAAIYTARKGIRTGVVAERF). Cys-337 and Cys-340 are oxidised to a cystine. 349 to 379 (DVAVIGGGNSGIEAAIDLAGIVNHVTVLEFA) is an NAD(+) binding site. 469–479 (TSVPGLFAAGD) is a binding site for FAD.

This sequence belongs to the class-II pyridine nucleotide-disulfide oxidoreductase family. Homodimer. The cofactor is FAD.

The protein localises to the cell membrane. The enzyme catalyses a ubiquinone + NADH + 5 H(+)(in) = a ubiquinol + NAD(+) + 4 H(+)(out). Its function is as follows. Transfer of electrons from NADH to the respiratory chain. The immediate electron acceptor for the enzyme is believed to be ubiquinone. The sequence is that of NADH dehydrogenase (ahpF) from Bacillus subtilis (strain 168).